The sequence spans 167 residues: RNA pyrophosphohydrolase (167 aa).

The Nudix hydrolase domain maps to 8-159 (PYRTCVGVML…KRPVYERVVK (152 aa)). The short motif at 47 to 68 (GGVDPGEDTWAAAKRELYEETS) is the Nudix box element.

This sequence belongs to the Nudix hydrolase family. RppH subfamily. A divalent metal cation serves as cofactor.

Accelerates the degradation of transcripts by removing pyrophosphate from the 5'-end of triphosphorylated RNA, leading to a more labile monophosphorylated state that can stimulate subsequent ribonuclease cleavage. This is RNA pyrophosphohydrolase from Bradyrhizobium diazoefficiens (strain JCM 10833 / BCRC 13528 / IAM 13628 / NBRC 14792 / USDA 110).